We begin with the raw amino-acid sequence, 290 residues long: Eukaryotic translation initiation factor 3 subunit G (290 aa).

Residues 1–34 are disordered; sequence MSRLGNRAADWADDEEFDDPSALPAQQVTTNKDG. One can recognise an RRM domain in the interval 210 to 288; that stretch reads ATLRVTNVSE…LILRVEFAKR (79 aa).

It belongs to the eIF-3 subunit G family. As to quaternary structure, component of the eukaryotic translation initiation factor 3 (eIF-3) complex.

It localises to the cytoplasm. Its function is as follows. RNA-binding component of the eukaryotic translation initiation factor 3 (eIF-3) complex, which is involved in protein synthesis of a specialized repertoire of mRNAs and, together with other initiation factors, stimulates binding of mRNA and methionyl-tRNAi to the 40S ribosome. The eIF-3 complex specifically targets and initiates translation of a subset of mRNAs involved in cell proliferation. This subunit can bind 18S rRNA. The sequence is that of Eukaryotic translation initiation factor 3 subunit G from Neosartorya fischeri (strain ATCC 1020 / DSM 3700 / CBS 544.65 / FGSC A1164 / JCM 1740 / NRRL 181 / WB 181) (Aspergillus fischerianus).